The following is a 240-amino-acid chain: Small ribosomal subunit protein uS3 (240 aa).

A KH type-2 domain is found at 39–109 (IRQHIDANLN…QIRINVVEVN (71 aa)). The interval 216-240 (TSAANAAPLPRRKSRRQQFEDRSEQ) is disordered.

Belongs to the universal ribosomal protein uS3 family. Part of the 30S ribosomal subunit. Forms a tight complex with proteins S10 and S14.

In terms of biological role, binds the lower part of the 30S subunit head. Binds mRNA in the 70S ribosome, positioning it for translation. The chain is Small ribosomal subunit protein uS3 from Picosynechococcus sp. (strain ATCC 27264 / PCC 7002 / PR-6) (Agmenellum quadruplicatum).